Consider the following 316-residue polypeptide: Cell division protein ZipA (316 aa).

At 1-5 (MQELR) the chain is on the periplasmic side. A helical transmembrane segment spans residues 6 to 26 (FVLIVVGALAIAALLFHGLWS). Over 27–316 (SKKEGKAKFG…QIVEFNAANA (290 aa)) the chain is Cytoplasmic. A disordered region spans residues 36–65 (GNKPLGKLDVDQGDKDSVEQERSFAPATED). The segment covering 41 to 57 (GKLDVDQGDKDSVEQER) has biased composition (basic and acidic residues).

It belongs to the ZipA family. In terms of assembly, interacts with FtsZ via their C-terminal domains.

The protein resides in the cell inner membrane. Essential cell division protein that stabilizes the FtsZ protofilaments by cross-linking them and that serves as a cytoplasmic membrane anchor for the Z ring. Also required for the recruitment to the septal ring of downstream cell division proteins. The polypeptide is Cell division protein ZipA (Vibrio parahaemolyticus serotype O3:K6 (strain RIMD 2210633)).